We begin with the raw amino-acid sequence, 322 residues long: Homoserine kinase (322 aa).

Residue 106 to 116 (ALSSGMGGSAA) coordinates ATP.

This sequence belongs to the GHMP kinase family. Homoserine kinase subfamily.

It is found in the cytoplasm. It carries out the reaction L-homoserine + ATP = O-phospho-L-homoserine + ADP + H(+). Its pathway is amino-acid biosynthesis; L-threonine biosynthesis; L-threonine from L-aspartate: step 4/5. Catalyzes the ATP-dependent phosphorylation of L-homoserine to L-homoserine phosphate. In Xanthomonas campestris pv. campestris (strain B100), this protein is Homoserine kinase.